A 1142-amino-acid polypeptide reads, in one-letter code: Golgi apparatus protein 1 (1142 aa).

Positions 1-29 (MAPCGRVRSRCPGPALLLLLALAARPALA) are cleaved as a signal peptide. Topologically, residues 30-1108 (GPPAAALQAG…MQVMTSPSKN (1079 aa)) are extracellular. Low complexity predominate over residues 45–60 (AGQPAQGAAPGAAGPR). The interval 45–69 (AGQPAQGAAPGAAGPRGARGGGGGS) is disordered. Cys-rich GLG1 repeat units lie at residues 81–112 (CRED…EPDN), 113–175 (EISS…GNIT), 178–241 (QCHQ…VKEA), 249–309 (QVSD…FEES), 310–376 (MSEK…HRGR), 377–436 (QVSS…RGEK), 438–500 (NVGL…YTEK), 501–567 (MVED…YRTE), 572–631 (RLSR…DDLV), 633–691 (DCRD…KHQK), 692–751 (EMNE…RNDT), 759–819 (RVSL…KQLS), 821–874 (RCHQ…KNSE), 875–942 (VMDP…ADQR), 943–998 (LSPD…ECLK), and 1004–1064 (IKTE…EDKR). Asn-128 and Asn-173 each carry an N-linked (GlcNAc...) asparagine glycan. N-linked (GlcNAc...) asparagine glycosylation occurs at Asn-544. 2 N-linked (GlcNAc...) asparagine glycosylation sites follow: Asn-640 and Asn-749. The chain crosses the membrane as a helical span at residues 1109–1129 (YILSVITVGICVLFLIGLMCG). The Cytoplasmic portion of the chain corresponds to 1130–1142 (RITKRVTRELKDR).

In terms of processing, fucosylation is essential for binding to E-selectin. N-glycosylated. Contains sialic acid residues.

It localises to the golgi apparatus membrane. The protein resides in the golgi outpost. Its subcellular location is the cytoplasm. It is found in the cytoskeleton. The protein localises to the microtubule organizing center. In terms of biological role, binds fibroblast growth factor and E-selectin (cell-adhesion lectin on endothelial cells mediating the binding of neutrophils). Binds fibroblast growth factor (FGF). May be involved in intracellular FGF trafficking and the regulation of cellular responses to FGFS. The chain is Golgi apparatus protein 1 (GLG1) from Gallus gallus (Chicken).